The sequence spans 137 residues: UPF0146 protein MJ0688 (137 aa).

Belongs to the UPF0146 family.

The polypeptide is UPF0146 protein MJ0688 (Methanocaldococcus jannaschii (strain ATCC 43067 / DSM 2661 / JAL-1 / JCM 10045 / NBRC 100440) (Methanococcus jannaschii)).